Reading from the N-terminus, the 237-residue chain is Phosphoribosylaminoimidazole-succinocarboxamide synthase (237 aa).

This sequence belongs to the SAICAR synthetase family.

It catalyses the reaction 5-amino-1-(5-phospho-D-ribosyl)imidazole-4-carboxylate + L-aspartate + ATP = (2S)-2-[5-amino-1-(5-phospho-beta-D-ribosyl)imidazole-4-carboxamido]succinate + ADP + phosphate + 2 H(+). It participates in purine metabolism; IMP biosynthesis via de novo pathway; 5-amino-1-(5-phospho-D-ribosyl)imidazole-4-carboxamide from 5-amino-1-(5-phospho-D-ribosyl)imidazole-4-carboxylate: step 1/2. The polypeptide is Phosphoribosylaminoimidazole-succinocarboxamide synthase (Alteromonas mediterranea (strain DSM 17117 / CIP 110805 / LMG 28347 / Deep ecotype)).